The sequence spans 190 residues: Secreted isochorismatase effector Isc1 (190 aa).

Residues Asp26, Lys100, and Cys133 contribute to the active site.

It belongs to the isochorismatase family.

It is found in the secreted. The protein resides in the host cytoplasm. It localises to the host nucleus. It carries out the reaction isochorismate + H2O = (2S,3S)-2,3-dihydroxy-2,3-dihydrobenzoate + pyruvate. Its function is as follows. Secreted isochorismatase required for full virulence of V.dahliae. Suppresses salicylate-mediated innate immunity of the host by disrupting the plant salicylate metabolism pathway via hydrolysis of its isochorismate precursor. In Verticillium dahliae (strain VdLs.17 / ATCC MYA-4575 / FGSC 10137) (Verticillium wilt), this protein is Secreted isochorismatase effector Isc1.